The chain runs to 364 residues: Urease accessory protein UreD (364 aa).

Disordered regions lie at residues 1-37 (MDQD…SSPA) and 201-250 (PPEV…AGER). Low complexity-rich tracts occupy residues 21–37 (AGSA…SSPA), 209–218 (APDRGAPAAE), and 236–248 (AASS…APAG).

It belongs to the UreD family. UreD, UreF and UreG form a complex that acts as a GTP-hydrolysis-dependent molecular chaperone, activating the urease apoprotein by helping to assemble the nickel containing metallocenter of UreC. The UreE protein probably delivers the nickel.

It is found in the cytoplasm. In terms of biological role, required for maturation of urease via the functional incorporation of the urease nickel metallocenter. This is Urease accessory protein UreD from Kocuria rhizophila (strain ATCC 9341 / DSM 348 / NBRC 103217 / DC2201).